The following is a 488-amino-acid chain: Beta-amylase (488 aa).

Positions 51, 91, and 99 each coordinate substrate. The active-site Proton donor is Glu-184. Lys-293, His-298, and Thr-340 together coordinate substrate. Glu-378 functions as the Proton acceptor in the catalytic mechanism. Substrate-binding positions include 379–380 (NA) and Arg-418.

The protein belongs to the glycosyl hydrolase 14 family.

The catalysed reaction is Hydrolysis of (1-&gt;4)-alpha-D-glucosidic linkages in polysaccharides so as to remove successive maltose units from the non-reducing ends of the chains.. The sequence is that of Beta-amylase (BMY1) from Zea mays (Maize).